We begin with the raw amino-acid sequence, 468 residues long: Neuronal acetylcholine receptor subunit alpha-5 (468 aa).

The first 22 residues, 1–22, serve as a signal peptide directing secretion; the sequence is MATRGSGPRAPRLLLLVQLVAG. The Extracellular portion of the chain corresponds to 23–254; it reads RCGLAGAAGG…VIKRLPLFYT (232 aa). Residues asparagine 155, asparagine 183, and asparagine 229 are each glycosylated (N-linked (GlcNAc...) asparagine). Cysteine 170 and cysteine 184 are joined by a disulfide. Cysteines 234 and 235 form a disulfide. 3 consecutive transmembrane segments (helical) span residues 255-275, 282-302, and 317-337; these read LFLI…FYLP, ICLC…IEEI, and LVFT…AINI. The Cytoplasmic segment spans residues 338 to 429; that stretch reads HHRSSSTHNA…WKFIAQVLDR (92 aa). The helical transmembrane segment at 430 to 451 threads the bilayer; that stretch reads MFLWTFLFVSIVGSLGLFVPVI. Over 452–468 the chain is Extracellular; the sequence is YKWANILIPVHIGNANK.

This sequence belongs to the ligand-gated ion channel (TC 1.A.9) family. Acetylcholine receptor (TC 1.A.9.1) subfamily. Alpha-5/CHRNA5 sub-subfamily. In terms of assembly, neuronal AChR that forms heteropentamers composed of two different type of subunits: alpha and non-alpha (beta). CHRNA5/alpha-5 subunit is only able to form functional nAChRs when co-assembled with another alpha subunit, can be combined to CHRNA4/alpha-4 or CHRNA3/alpha-3 and CHRNB4/beta-4 or CHRNB2/beta-2 to give rise to functional receptors. Interacts with LYPD6.

The protein resides in the synaptic cell membrane. The protein localises to the cell membrane. The catalysed reaction is Ca(2+)(in) = Ca(2+)(out). The enzyme catalyses K(+)(in) = K(+)(out). It carries out the reaction Na(+)(in) = Na(+)(out). Activated by a myriad of ligands such as acetylcholine, cytisine, nicotine, choline and epibatidine. In terms of biological role, component of neuronal acetylcholine receptors (nAChRs) that function as pentameric, ligand-gated cation channels with high calcium permeability among other activities. nAChRs are excitatory neurotrasnmitter receptors formed by a collection of nAChR subunits known to mediate synaptic transmission in the nervous system and the neuromuscular junction. Each nAchR subunit confers differential attributes to channel properties, including activation, deactivation and desensitization kinetics, pH sensitivity, cation permeability, and binding to allosteric modulators. Has an accessory rather than functional role and is only able to form functional nAChRs when co-assembled with another beta subunit. Participates in pentameric assemblies along with CHRNA3, CHRNA4, CHRNB2 and CHRNB4. Increases receptor sensitivity to acetylcholine and nicotine when associated with CHRNA4 and CHRNB2. Plays a role in nicotine addiction. In Pan troglodytes (Chimpanzee), this protein is Neuronal acetylcholine receptor subunit alpha-5 (CHRNA5).